The sequence spans 382 residues: uncharacterized protein (382 aa).

A run of 12 helical transmembrane segments spans residues Gly14–Ala34, Val45–Ile65, Phe79–Ala99, Phe102–Ser122, Leu131–Ser151, Leu157–Phe177, Leu204–Pro224, Ala235–Ile255, Val270–Pro290, Ala291–Cys311, Ala325–Met345, and Phe348–Leu368.

Belongs to the major facilitator superfamily. YcaD (TC 2.A.1.26) family.

The protein resides in the cell inner membrane. This is an uncharacterized protein from Escherichia coli O7:K1 (strain IAI39 / ExPEC).